The following is a 327-amino-acid chain: MAKPIRVLLYYKYVPIENAEQFAADHLAFCKSIGLKGRILVADEGINGTVSGDYETTQKYMDYVHSLPGMEDLWFKIDEEEEQAFKKMFVRYKKEIVHLGLEDNNFDSDINPLETTGAYLSPKEFKDALLDEDTVVLDTRNDYEYDLGHFRGAIRPDIRNFRELPQWVRDHKEEFMDKRVVVYCTGGVRCEKFSGWLVREGYKDVGQLHGGIVTYGKDPEVQGELWDGKLYVFDERIAVDVNHVDPIVVGKDWFDGTPCERYVNCGNPFCNRRILTSEENEDKYLRGCSHECRVHPRNRYVSENDLSQEEVVSRLAAIGESLDVTPA.

Residues 130–224 (LDEDTVVLDT…YGKDPEVQGE (95 aa)) form the Rhodanese domain. C184 serves as the catalytic Cysteine persulfide intermediate.

The protein belongs to the TrhO family.

It catalyses the reaction uridine(34) in tRNA + AH2 + O2 = 5-hydroxyuridine(34) in tRNA + A + H2O. Catalyzes oxygen-dependent 5-hydroxyuridine (ho5U) modification at position 34 in tRNAs. The chain is tRNA uridine(34) hydroxylase from Streptococcus thermophilus (strain ATCC BAA-491 / LMD-9).